The primary structure comprises 507 residues: MSSLANKAKSKGKSSKSKSNVNTQVDELSDSIGLVVRVMTAVVDIKFDGGKVPKILNALESKKFYNGKKLVLEVSQHISDNIVRCIALDSTDGLSRNDEFIDTRAPISVPVGRGTLGRVFDVLGNTIDDCGPLEESKYIIKPIYSEIPKLTDQKIATEILVTGIKVIDLLAPYLKGGKVGLFGGAGVGKTVLIMELIHNIAKAHRGVSVFAGVGERTREGNDLYHEMIESGVINLNEKDQSQAVLVYGQMNEPPGARLRVALSALTMAEYFRDSENQDVLFFVDNIFRFTQSGSEISALLGRIPSAVGYQPTLAAEMGAMQERITSTNNGSITSVQAIYVPADDLTDPAPATSFAHLDSTTVLSRQISELGIYPAVDPLDSTSQALSADIVGEEHYEVAKEVQRILQTYKSLQDIIAILGMDELSEDDKLIVARARKIQRFLSQPFHVAEVFTGSPGKFVSLEDTVSSFKGLVEGKYDHLPEAAFYMVGSIDDVIKKAELLQKEGKV.

The segment at 1–22 is disordered; that stretch reads MSSLANKAKSKGKSSKSKSNVN. 183–190 is an ATP binding site; the sequence is GGAGVGKT.

This sequence belongs to the ATPase alpha/beta chains family. F-type ATPases have 2 components, CF(1) - the catalytic core - and CF(0) - the membrane proton channel. CF(1) has five subunits: alpha(3), beta(3), gamma(1), delta(1), epsilon(1). CF(0) has three main subunits: a(1), b(2) and c(9-12). The alpha and beta chains form an alternating ring which encloses part of the gamma chain. CF(1) is attached to CF(0) by a central stalk formed by the gamma and epsilon chains, while a peripheral stalk is formed by the delta and b chains.

It is found in the cell inner membrane. The catalysed reaction is ATP + H2O + 4 H(+)(in) = ADP + phosphate + 5 H(+)(out). Produces ATP from ADP in the presence of a proton gradient across the membrane. The catalytic sites are hosted primarily by the beta subunits. The protein is ATP synthase subunit beta of Ehrlichia canis (strain Jake).